A 503-amino-acid polypeptide reads, in one-letter code: Type II secretion system ATPase E (503 aa).

Residues C397, C400, C430, and C433 each coordinate Zn(2+).

The protein belongs to the GSP E family. As to quaternary structure, forms homooligomers; most probably hexamers. Interacts with EpsL/GspL. Zn(2+) is required as a cofactor.

It is found in the cell inner membrane. The catalysed reaction is ATP + H2O + cellular proteinSide 1 = ADP + phosphate + cellular proteinSide 2.. Its function is as follows. ATPase component of the type II secretion system required for the energy-dependent secretion of extracellular factors such as proteases and toxins from the periplasm. Acts as a molecular motor to provide the energy that is required for assembly of the pseudopilus and the extrusion of substrates generated in the cytoplasm. The protein is Type II secretion system ATPase E (epsE) of Vibrio cholerae serotype O1 (strain ATCC 39315 / El Tor Inaba N16961).